The sequence spans 398 residues: S-adenosylmethionine synthase (398 aa).

His-16 contacts ATP. Asp-18 lines the Mg(2+) pocket. Glu-51 provides a ligand contact to K(+). L-methionine is bound by residues Glu-64 and Gln-108. Residues 108–118 (QSADIAQGVDA) are flexible loop. Residues 176-178 (DSK), 242-243 (KF), Asp-251, 257-258 (RK), Ala-274, and Lys-278 contribute to the ATP site. Asp-251 lines the L-methionine pocket. Lys-282 is an L-methionine binding site.

It belongs to the AdoMet synthase family. Homotetramer; dimer of dimers. It depends on Mg(2+) as a cofactor. Requires K(+) as cofactor.

Its subcellular location is the cytoplasm. The enzyme catalyses L-methionine + ATP + H2O = S-adenosyl-L-methionine + phosphate + diphosphate. The protein operates within amino-acid biosynthesis; S-adenosyl-L-methionine biosynthesis; S-adenosyl-L-methionine from L-methionine: step 1/1. Functionally, catalyzes the formation of S-adenosylmethionine (AdoMet) from methionine and ATP. The overall synthetic reaction is composed of two sequential steps, AdoMet formation and the subsequent tripolyphosphate hydrolysis which occurs prior to release of AdoMet from the enzyme. The protein is S-adenosylmethionine synthase of Bradyrhizobium diazoefficiens (strain JCM 10833 / BCRC 13528 / IAM 13628 / NBRC 14792 / USDA 110).